The primary structure comprises 408 residues: Na(+)/H(+) antiporter NhaA (408 aa).

Helical transmembrane passes span 42 to 62 (LMFV…PVYF), 69 to 89 (VLGL…FFLL), 110 to 130 (ALPG…FIAV), 140 to 160 (GWAI…SLLG), 169 to 189 (IFLT…IALF), 192 to 212 (AELT…LAAL), 215 to 235 (FGVK…FFVL), 238 to 258 (GIHA…QAST), 277 to 297 (VAFL…FAGL), 312 to 332 (LGLF…AIWL), 346 to 366 (LYGV…IGLL), and 380 to 400 (IGVL…LRVT).

It belongs to the NhaA Na(+)/H(+) (TC 2.A.33) antiporter family.

Its subcellular location is the cell inner membrane. It catalyses the reaction Na(+)(in) + 2 H(+)(out) = Na(+)(out) + 2 H(+)(in). Its function is as follows. Na(+)/H(+) antiporter that extrudes sodium in exchange for external protons. The protein is Na(+)/H(+) antiporter NhaA of Nitrobacter hamburgensis (strain DSM 10229 / NCIMB 13809 / X14).